A 377-amino-acid chain; its full sequence is 3-dehydroquinate synthase (377 aa).

Residues 115-119 (GVIGD), 139-140 (TS), Lys-152, and Lys-161 contribute to the NAD(+) site. Residues Glu-194, His-256, and His-275 each contribute to the Zn(2+) site.

The protein belongs to the sugar phosphate cyclases superfamily. Dehydroquinate synthase family. Co(2+) serves as cofactor. Requires Zn(2+) as cofactor. It depends on NAD(+) as a cofactor.

It is found in the cytoplasm. The enzyme catalyses 7-phospho-2-dehydro-3-deoxy-D-arabino-heptonate = 3-dehydroquinate + phosphate. It functions in the pathway metabolic intermediate biosynthesis; chorismate biosynthesis; chorismate from D-erythrose 4-phosphate and phosphoenolpyruvate: step 2/7. Functionally, catalyzes the conversion of 3-deoxy-D-arabino-heptulosonate 7-phosphate (DAHP) to dehydroquinate (DHQ). This chain is 3-dehydroquinate synthase, found in Rhizobium rhizogenes (strain K84 / ATCC BAA-868) (Agrobacterium radiobacter).